The sequence spans 224 residues: Germin-like protein 8-9 (224 aa).

Residues 1-22 (MASPSFCLFAALLALVSWQAIA) form the signal peptide. Cys-32 and Cys-47 are joined by a disulfide. Residues 62–212 (AMLDTPRKTN…AFQVGKGTID (151 aa)) enclose the Cupin type-1 domain. The N-linked (GlcNAc...) asparagine glycan is linked to Asn-76. Residues His-109, His-111, and Glu-116 each coordinate Mn(2+). The N-linked (GlcNAc...) asparagine glycan is linked to Asn-135. Position 157 (His-157) interacts with Mn(2+).

It belongs to the germin family. In terms of assembly, oligomer (believed to be a pentamer but probably hexamer).

The protein resides in the secreted. It localises to the extracellular space. It is found in the apoplast. Plays a role in broad-spectrum disease resistance. Probably has no oxalate oxidase activity even if the active site is conserved. The sequence is that of Germin-like protein 8-9 from Oryza sativa subsp. japonica (Rice).